We begin with the raw amino-acid sequence, 1644 residues long: Peroxisome proliferator-activated receptor gamma coactivator-related protein 1 (1644 aa).

7 disordered regions span residues 1–61 (MAAR…DSSF), 170–249 (PERD…EVAG), 429–616 (LTPK…TSPV), 646–761 (AADP…PETP), 773–884 (SAPA…QPPG), 978–1074 (STVS…EGVV), and 1322–1507 (AAPP…NDHY). Pro residues predominate over residues 12-22 (APPPTGGPGPD). Low complexity predominate over residues 213–222 (SSPKLPSWRP). Ser232 carries the post-translational modification Phosphoserine. The tract at residues 425–460 (IMESLTPKEPQSLPASASQGSQKVPRKGRKKKNKEQ) is necessary for interaction with CREB1 and NRF1 and for transcriptional coactivation. Residues 437–446 (LPASASQGSQ) are compositionally biased toward polar residues. Residues 448 to 457 (VPRKGRKKKN) are compositionally biased toward basic residues. A compositionally biased stretch (polar residues) spans 475 to 496 (SSRGQSTVSAEVNSQAGSSQKQ). Positions 515–524 (RAWARAWAAA) are enriched in low complexity. Residue Ser541 is modified to Phosphoserine. Over residues 556–572 (ETSQANPTLSLNDSAQA) the composition is skewed to polar residues. A compositionally biased stretch (basic and acidic residues) spans 691 to 702 (DHPKVVSPEGKD). Residues 811–821 (MVSTHSEQVSS) are compositionally biased toward polar residues. Composition is skewed to pro residues over residues 828–864 (VRPPPPPLPSVSPAGPIPSTVPAPLPPFPPSVPPLLP) and 874–884 (RLPPPPLQPPG). A phosphoserine mark is found at Ser1059, Ser1393, and Ser1395. The tract at residues 1361 to 1432 (EASPCRSEMN…SSSSSVSSSS (72 aa)) is necessary for interaction with CREB1 and NRF1. 2 stretches are compositionally biased toward low complexity: residues 1409-1433 (SRSVSSGSSRTSEASSSSSVSSSSR) and 1453-1489 (SSCSSSGRSRRCSSSSSSSSSSSSCSSRSRSPSVSPC). In terms of domain architecture, RRM spans 1523 to 1599 (RVVFIGKIPG…QPFDLCFGGR (77 aa)).

Interacts with CREB1 and NRF1. As to expression, expressed in liver, heart, skeletal muscle, kidney and white and brown adipose tissues.

It localises to the nucleus. Functionally, acts as a coactivator during transcriptional activation of nuclear genes related to mitochondrial biogenesis and cell growth. Involved in the transcription coactivation of CREB and NRF1 target genes. The chain is Peroxisome proliferator-activated receptor gamma coactivator-related protein 1 (Pprc1) from Mus musculus (Mouse).